A 115-amino-acid polypeptide reads, in one-letter code: C-C motif chemokine 6 (115 aa).

The N-terminal stretch at 1–21 is a signal peptide; the sequence is MRHSKTAISFFILVAVLGSQA. 3 disulfide bridges follow: cysteine 49/cysteine 72, cysteine 50/cysteine 88, and cysteine 59/cysteine 99.

Belongs to the intercrine beta (chemokine CC) family.

The protein resides in the secreted. This chain is C-C motif chemokine 6 (Ccl6), found in Rattus norvegicus (Rat).